The following is a 62-amino-acid chain: MAKCDICGKGVGFGKKYSHSHIRTNRQWKPNIQPVKAIVDGTPKKIYVCTRCLRSGKVERAI.

This sequence belongs to the bacterial ribosomal protein bL28 family.

The sequence is that of Large ribosomal subunit protein bL28 from Syntrophomonas wolfei subsp. wolfei (strain DSM 2245B / Goettingen).